Consider the following 190-residue polypeptide: Elongation factor P-like protein (190 aa).

It belongs to the elongation factor P family.

The chain is Elongation factor P-like protein from Pseudoalteromonas translucida (strain TAC 125).